Consider the following 1238-residue polypeptide: Protein MMS22-like (1238 aa).

Belongs to the MMS22 family. MMS22L subfamily. As to quaternary structure, component of the MMS22L-TONSL complex, a complex at least composed of MMS22L and TONSL/NFKBIL2. Interacts with RAD51; interaction is direct. Post-translationally, degraded by the ubiquitin-proteasome system upon replication stress.

Its subcellular location is the nucleus. The protein resides in the chromosome. Functionally, component of the MMS22L-TONSL complex, a complex that promotes homologous recombination-mediated repair of double-strand breaks (DSBs) at stalled or collapsed replication forks. The MMS22L-TONSL complex is required to maintain genome integrity during DNA replication. It mediates the assembly of RAD51 filaments on single-stranded DNA (ssDNA): the MMS22L-TONSL complex is recruited to DSBs following histone replacement by histone chaperones and eviction of the replication protein A complex (RPA/RP-A) from DSBs. Following recruitment to DSBs, the TONSL-MMS22L complex promotes recruitment of RAD51 filaments and subsequent homologous recombination. Within the complex, MMS22L acts by binding ssDNA. This is Protein MMS22-like (Mms22l) from Mus musculus (Mouse).